A 356-amino-acid chain; its full sequence is Peptide chain release factor 1 (356 aa).

The residue at position 232 (glutamine 232) is an N5-methylglutamine.

This sequence belongs to the prokaryotic/mitochondrial release factor family. Methylated by PrmC. Methylation increases the termination efficiency of RF1.

It localises to the cytoplasm. Functionally, peptide chain release factor 1 directs the termination of translation in response to the peptide chain termination codons UAG and UAA. In Thermoanaerobacter pseudethanolicus (strain ATCC 33223 / 39E) (Clostridium thermohydrosulfuricum), this protein is Peptide chain release factor 1.